We begin with the raw amino-acid sequence, 236 residues long: Large ribosomal subunit protein uL3 (236 aa).

Belongs to the universal ribosomal protein uL3 family. In terms of assembly, part of the 50S ribosomal subunit. Forms a cluster with proteins L14 and L19.

Functionally, one of the primary rRNA binding proteins, it binds directly near the 3'-end of the 23S rRNA, where it nucleates assembly of the 50S subunit. The protein is Large ribosomal subunit protein uL3 of Anaeromyxobacter dehalogenans (strain 2CP-1 / ATCC BAA-258).